A 492-amino-acid chain; its full sequence is Putative heme-binding protein VNG_2021C (492 aa).

Position 177 (H177) interacts with heme. The disordered stretch occupies residues 253-301; the sequence is AGERVPAPEGGADAHGEGERTHHHGDSDHHDGDDGEQHHHSTGDEADDG. The span at 264 to 301 shows a compositional bias: basic and acidic residues; it reads ADAHGEGERTHHHGDSDHHDGDDGEQHHHSTGDEADDG. Residues 402–490 form the ABM domain; it reads GTMGMFYETK…VLADRPRHVF (89 aa).

This sequence in the N-terminal section; belongs to the ChdC family.

This is Putative heme-binding protein VNG_2021C from Halobacterium salinarum (strain ATCC 700922 / JCM 11081 / NRC-1) (Halobacterium halobium).